The sequence spans 23 residues: Basic phospholipase A2 Smb-N6 (23 aa).

Belongs to the phospholipase A2 family. Group II subfamily. It depends on Ca(2+) as a cofactor. Contains 7 disulfide bonds. As to expression, expressed by the venom gland.

It is found in the secreted. The enzyme catalyses a 1,2-diacyl-sn-glycero-3-phosphocholine + H2O = a 1-acyl-sn-glycero-3-phosphocholine + a fatty acid + H(+). Its function is as follows. Snake venom phospholipase A2 (PLA2) that shows myotoxic activities. PLA2 catalyzes the calcium-dependent hydrolysis of the 2-acyl groups in 3-sn-phosphoglycerides. In Sistrurus miliarius barbouri (Dusky pigmy rattlesnake), this protein is Basic phospholipase A2 Smb-N6.